The following is a 221-amino-acid chain: Histidine biosynthesis bifunctional protein HisIE (221 aa).

Positions 1–121 are phosphoribosyl-AMP cyclohydrolase; it reads MNITKIDWQK…KKQQFANWAW (121 aa). The tract at residues 122 to 221 is phosphoribosyl-ATP pyrophosphohydrolase; the sequence is FIKLEQHLKE…IGLHPEGGNK (100 aa).

The protein in the N-terminal section; belongs to the PRA-CH family. It in the C-terminal section; belongs to the PRA-PH family.

Its subcellular location is the cytoplasm. It carries out the reaction 1-(5-phospho-beta-D-ribosyl)-ATP + H2O = 1-(5-phospho-beta-D-ribosyl)-5'-AMP + diphosphate + H(+). The catalysed reaction is 1-(5-phospho-beta-D-ribosyl)-5'-AMP + H2O = 1-(5-phospho-beta-D-ribosyl)-5-[(5-phospho-beta-D-ribosylamino)methylideneamino]imidazole-4-carboxamide. It functions in the pathway amino-acid biosynthesis; L-histidine biosynthesis; L-histidine from 5-phospho-alpha-D-ribose 1-diphosphate: step 2/9. It participates in amino-acid biosynthesis; L-histidine biosynthesis; L-histidine from 5-phospho-alpha-D-ribose 1-diphosphate: step 3/9. The protein is Histidine biosynthesis bifunctional protein HisIE (hisI) of Haemophilus influenzae (strain ATCC 51907 / DSM 11121 / KW20 / Rd).